The chain runs to 313 residues: Ribosomal RNA small subunit methyltransferase H (313 aa).

Residues 35-37, Asp55, Phe80, Asp102, and Gln109 each bind S-adenosyl-L-methionine; that span reads GGH.

It belongs to the methyltransferase superfamily. RsmH family.

It localises to the cytoplasm. It carries out the reaction cytidine(1402) in 16S rRNA + S-adenosyl-L-methionine = N(4)-methylcytidine(1402) in 16S rRNA + S-adenosyl-L-homocysteine + H(+). Its function is as follows. Specifically methylates the N4 position of cytidine in position 1402 (C1402) of 16S rRNA. The protein is Ribosomal RNA small subunit methyltransferase H of Shewanella sp. (strain MR-4).